The following is a 314-amino-acid chain: DNA-directed RNA polymerase subunit alpha (314 aa).

The alpha N-terminal domain (alpha-NTD) stretch occupies residues 1–228 (MIEIEKPRIE…EHLNIFVSLT (228 aa)). The interval 245–314 (KEKVLEMSIE…DLGLGLRKED (70 aa)) is alpha C-terminal domain (alpha-CTD).

This sequence belongs to the RNA polymerase alpha chain family. In terms of assembly, homodimer. The RNAP catalytic core consists of 2 alpha, 1 beta, 1 beta' and 1 omega subunit. When a sigma factor is associated with the core the holoenzyme is formed, which can initiate transcription.

The catalysed reaction is RNA(n) + a ribonucleoside 5'-triphosphate = RNA(n+1) + diphosphate. DNA-dependent RNA polymerase catalyzes the transcription of DNA into RNA using the four ribonucleoside triphosphates as substrates. The chain is DNA-directed RNA polymerase subunit alpha from Staphylococcus epidermidis (strain ATCC 35984 / DSM 28319 / BCRC 17069 / CCUG 31568 / BM 3577 / RP62A).